The primary structure comprises 175 residues: ATP synthase subunit delta (175 aa).

It belongs to the ATPase delta chain family. In terms of assembly, F-type ATPases have 2 components, F(1) - the catalytic core - and F(0) - the membrane proton channel. F(1) has five subunits: alpha(3), beta(3), gamma(1), delta(1), epsilon(1). F(0) has three main subunits: a(1), b(2) and c(10-14). The alpha and beta chains form an alternating ring which encloses part of the gamma chain. F(1) is attached to F(0) by a central stalk formed by the gamma and epsilon chains, while a peripheral stalk is formed by the delta and b chains.

The protein localises to the cell inner membrane. In terms of biological role, f(1)F(0) ATP synthase produces ATP from ADP in the presence of a proton or sodium gradient. F-type ATPases consist of two structural domains, F(1) containing the extramembraneous catalytic core and F(0) containing the membrane proton channel, linked together by a central stalk and a peripheral stalk. During catalysis, ATP synthesis in the catalytic domain of F(1) is coupled via a rotary mechanism of the central stalk subunits to proton translocation. Its function is as follows. This protein is part of the stalk that links CF(0) to CF(1). It either transmits conformational changes from CF(0) to CF(1) or is implicated in proton conduction. The protein is ATP synthase subunit delta of Xylella fastidiosa (strain M12).